The following is a 1070-amino-acid chain: DNA-directed RNA polymerase subunit beta (1070 aa).

Belongs to the RNA polymerase beta chain family. In plastids the minimal PEP RNA polymerase catalytic core is composed of four subunits: alpha, beta, beta', and beta''. When a (nuclear-encoded) sigma factor is associated with the core the holoenzyme is formed, which can initiate transcription.

It is found in the plastid. Its subcellular location is the chloroplast. The catalysed reaction is RNA(n) + a ribonucleoside 5'-triphosphate = RNA(n+1) + diphosphate. Functionally, DNA-dependent RNA polymerase catalyzes the transcription of DNA into RNA using the four ribonucleoside triphosphates as substrates. In Phaseolus vulgaris (Kidney bean), this protein is DNA-directed RNA polymerase subunit beta.